Here is a 100-residue protein sequence, read N- to C-terminus: Urease subunit gamma (100 aa).

The protein belongs to the urease gamma subunit family. Heterotrimer of UreA (gamma), UreB (beta) and UreC (alpha) subunits. Three heterotrimers associate to form the active enzyme.

The protein resides in the cytoplasm. It carries out the reaction urea + 2 H2O + H(+) = hydrogencarbonate + 2 NH4(+). It functions in the pathway nitrogen metabolism; urea degradation; CO(2) and NH(3) from urea (urease route): step 1/1. This chain is Urease subunit gamma, found in Rhizobium rhizogenes (strain K84 / ATCC BAA-868) (Agrobacterium radiobacter).